Here is a 902-residue protein sequence, read N- to C-terminus: Leucine-rich repeat-containing G-protein coupled receptor 5 (902 aa).

An N-terminal signal peptide occupies residues 1–22 (MDTSKTSFFLFSVLCSLQLVGA). The Extracellular segment spans residues 23–558 (ARPGKQQRSC…HLFGSWLTRT (536 aa)). Cystine bridges form between Cys-32–Cys-38 and Cys-36–Cys-49. Residues 32–61 (CPTPCECEQEGMLVRVDCSDRALTSLPRNL) enclose the LRRNT domain. 17 LRR repeats span residues 41–61 (EGML…PRNL), 62–85 (SIFT…VMHN), 86–109 (LHFL…AFAG), 111–133 (GSLK…ALHN), 134–157 (LRSL…SFNG), 159–181 (FSLR…ALES), 182–205 (LSAL…AFRN), 207–229 (SSLV…CFDG), 230–253 (LHSL…IKTL), 254–276 (KNLK…AFIG), 278–300 (PSLI…AFQH), 302–324 (PELR…LTGT), 325–347 (TSLE…VCTQ), 348–372 (LPNL…GCQR), 374–393 (QKID…TFQQ), 394–417 (LVGL…SFSS), and 418–441 (LPSL…GLHG). N-linked (GlcNAc...) asparagine glycans are attached at residues Asn-60 and Asn-74. Residue Asn-205 is glycosylated (N-linked (GlcNAc...) asparagine). Cysteines 345 and 370 form a disulfide. Cys-476 and Cys-537 are disulfide-bonded. N-linked (GlcNAc...) asparagine glycosylation is present at Asn-496. The chain crosses the membrane as a helical span at residues 559–579 (GVWLIVLLSFVCNALVIATVF). The Cytoplasmic portion of the chain corresponds to 580–589 (RPLSYVPSIK). A helical membrane pass occupies residues 590-610 (LLIGLIAIMNTLMGLSSGVLA). The LRR 18 repeat unit spans residues 598-619 (MNTLMGLSSGVLATVDALTFGN). Over 611-634 (TVDALTFGNFAQYGAWWESGVGCQ) the chain is Extracellular. Cysteines 633 and 708 form a disulfide. The chain crosses the membrane as a helical span at residues 635–655 (ITGFLSVFAAETSIFLLTVAA). The Cytoplasmic segment spans residues 656 to 678 (LERGFSIKCTTKFETKSSFINVK). A helical transmembrane segment spans residues 679–699 (LSIVFCFLLSIVIAVSPLLSG). At 700 to 718 (STYGTSPLCFPLLFGDPSS) the chain is on the extracellular side. The helical transmembrane segment at 719 to 739 (MGFMVALVLLNSLCFLVMTIA) threads the bilayer. Over 740-763 (YTKLYCSLEKGELENIWDCSMVKH) the chain is Cytoplasmic. A helical membrane pass occupies residues 764-784 (IALLLFTNCILYCPVAFLSFS). At 785 to 798 (SLLNLTFISPEVNK) the chain is on the extracellular side. 2 N-linked (GlcNAc...) asparagine glycosylation sites follow: Asn-788 and Asn-797. Residues 799 to 819 (SILLLIIPLPACLNPLLYILF) traverse the membrane as a helical segment. At 820–902 (NPHFKEDIGS…LSAVAFVPCH (83 aa)) the chain is on the cytoplasmic side.

This sequence belongs to the G-protein coupled receptor 1 family.

The protein localises to the cell membrane. Its subcellular location is the golgi apparatus. It localises to the trans-Golgi network membrane. Functionally, receptor for R-spondins that potentiates the canonical Wnt signaling pathway and acts as a stem cell marker of the intestinal epithelium and the hair follicle. Upon binding to R-spondins (RSPO1, RSPO2, RSPO3 or RSPO4), associates with phosphorylated LRP6 and frizzled receptors that are activated by extracellular Wnt receptors, triggering the canonical Wnt signaling pathway to increase expression of target genes. In contrast to classical G-protein coupled receptors, does not activate heterotrimeric G-proteins to transduce the signal. Involved in the development and/or maintenance of the adult intestinal stem cells during postembryonic development. The sequence is that of Leucine-rich repeat-containing G-protein coupled receptor 5 (lgr5) from Xenopus tropicalis (Western clawed frog).